A 219-amino-acid polypeptide reads, in one-letter code: Ribosomal RNA small subunit methyltransferase G (219 aa).

S-adenosyl-L-methionine-binding positions include Gly-78, Phe-83, 129 to 130 (GE), and Arg-146.

This sequence belongs to the methyltransferase superfamily. RNA methyltransferase RsmG family.

Its subcellular location is the cytoplasm. It carries out the reaction guanosine(527) in 16S rRNA + S-adenosyl-L-methionine = N(7)-methylguanosine(527) in 16S rRNA + S-adenosyl-L-homocysteine. In terms of biological role, specifically methylates the N7 position of guanine in position 527 of 16S rRNA. The polypeptide is Ribosomal RNA small subunit methyltransferase G (Geotalea uraniireducens (strain Rf4) (Geobacter uraniireducens)).